The chain runs to 559 residues: Tectonic-like complex member MKS1 (559 aa).

One can recognise a C2 B9-type domain in the interval 311-439; that stretch reads LRLFVNGEVV…TVSTWRPVEL (129 aa).

In terms of assembly, part of the tectonic-like complex (also named B9 complex). Interacts with TMEM107. Interacts with TCTN3, AHI1, TCTN1, TCTN2, CC2D2A. Interacts with FLNA. Interacts with TMEM67. Interacts with B9D1 and B9D2.

The protein resides in the cytoplasm. It is found in the cytoskeleton. The protein localises to the cilium basal body. Its subcellular location is the microtubule organizing center. It localises to the centrosome. Its function is as follows. Component of the tectonic-like complex, a complex localized at the transition zone of primary cilia and acting as a barrier that prevents diffusion of transmembrane proteins between the cilia and plasma membranes. Involved in centrosome migration to the apical cell surface during early ciliogenesis. Required for ciliary structure and function, including a role in regulating length and appropriate number through modulating centrosome duplication. Required for cell branching morphology. This is Tectonic-like complex member MKS1 (MKS1) from Homo sapiens (Human).